We begin with the raw amino-acid sequence, 331 residues long: Pseudouridylate synthase TRUB2, mitochondrial (331 aa).

The active-site Nucleophile is D98. The segment at 309–331 (STGQPWGLKDPSSTLELESCSGQ) is disordered. The segment covering 319 to 331 (PSSTLELESCSGQ) has biased composition (polar residues).

Belongs to the pseudouridine synthase TruB family. In terms of assembly, forms a regulatory protein-RNA complex, consisting of RCC1L, NGRN, RPUSD3, RPUSD4, TRUB2, FASTKD2 and 16S mt-rRNA.

The protein resides in the mitochondrion matrix. The catalysed reaction is a uridine in mRNA = a pseudouridine in mRNA. It catalyses the reaction uridine(55) in tRNA = pseudouridine(55) in tRNA. Functionally, minor enzyme contributing to the isomerization of uridine to pseudouridine (pseudouridylation) of specific mitochondrial mRNAs (mt-mRNAs) such as COXI and COXIII mt-mRNAs. As a component of a functional protein-RNA module, consisting of RCC1L, NGRN, RPUSD3, RPUSD4, TRUB2, FASTKD2 and 16S mitochondrial ribosomal RNA (16S mt-rRNA), controls 16S mt-rRNA abundance and is required for intra-mitochondrial translation. Also catalyzes pseudouridylation of some tRNAs, including synthesis of pseudouridine(55) from uracil-55, in the psi GC loop of a subset of tRNAs. The sequence is that of Pseudouridylate synthase TRUB2, mitochondrial from Mus musculus (Mouse).